Consider the following 1892-residue polypeptide: Protein TIC 214 (1892 aa).

The next 6 helical transmembrane spans lie at 12–32 (LISLYMTIINSVVMVGLYYGF), 68–88 (FIAGQLMMFISIYYVPLHLAL), 89–109 (GKPHTITVLALPYLLFHFFWN), 128–148 (LSIQCVFLNNLIIQLFNHFIL), 176–196 (VGWLIGHILLMKWVGLVLVWI), and 225–245 (IFSILLFITCVYYLGRIPSPI). Residues 256-266 (PEEVGESEEER) are compositionally biased toward acidic residues. The disordered stretch occupies residues 256-299 (PEEVGESEEERNIEIETISEGGGANQKQGTEENTSSSLFSEEEV). A compositionally biased stretch (polar residues) spans 280–294 (NQKQGTEENTSSSLF). A helical membrane pass occupies residues 1115-1135 (FYFFINFFIEKIYMDILLYII). The tract at residues 1613–1636 (SNQEKDVEEDYDKSDKKKRRKKKQ) is disordered.

It belongs to the TIC214 family. In terms of assembly, part of the Tic complex.

It is found in the plastid. It localises to the chloroplast inner membrane. In terms of biological role, involved in protein precursor import into chloroplasts. May be part of an intermediate translocation complex acting as a protein-conducting channel at the inner envelope. In Gossypium hirsutum (Upland cotton), this protein is Protein TIC 214.